Here is a 323-residue protein sequence, read N- to C-terminus: Sphingolipid delta(4)-desaturase DES1 (323 aa).

A lipid anchor (N-myristoyl glycine) is attached at G2. 2 consecutive transmembrane segments (helical) span residues 41–61 and 68–88; these read SNLI…FYLV and WVLF…TLAI. The Histidine box-1 signature appears at 89 to 93; the sequence is HEVSH. Residues 102-122 form a helical membrane-spanning segment; it reads AMWNRWFGIFANLPIGVPYSV. Residues 128–132 carry the Histidine box-2 motif; it reads HMDHH. The next 3 helical transmembrane spans lie at 152-172, 184-204, and 209-229; these read FFCT…FYAF, YLEI…YYVL, and LVYM…SGHF. The Histidine box-3 signature appears at 259 to 263; sequence HNEHH. A Phosphoserine modification is found at S307.

The protein belongs to the fatty acid desaturase type 1 family. DEGS subfamily. In terms of assembly, interacts with RLBP1; the interaction increases synthesis of chromophore-precursors by DEGS1. Myristoylation can target the enzyme to the mitochondria leading to an increase in ceramide levels.

Its subcellular location is the mitochondrion membrane. The protein localises to the endoplasmic reticulum membrane. The catalysed reaction is an N-acylsphinganine + 2 Fe(II)-[cytochrome b5] + O2 + 2 H(+) = an N-acylsphing-4-enine + 2 Fe(III)-[cytochrome b5] + 2 H2O. The enzyme catalyses all-trans-retinol = 11-cis-retinol. It carries out the reaction all-trans-retinol = 9-cis-retinol. It catalyses the reaction all-trans-retinol = 13-cis-retinol. The catalysed reaction is 11-cis-retinol = 13-cis-retinol. The enzyme catalyses 11-cis-retinol = 9-cis-retinol. Has sphingolipid-delta-4-desaturase activity. Converts D-erythro-sphinganine to D-erythro-sphingosine (E-sphing-4-enine). Catalyzes the equilibrium isomerization of retinols. This is Sphingolipid delta(4)-desaturase DES1 (DEGS1) from Bos taurus (Bovine).